A 408-amino-acid polypeptide reads, in one-letter code: Myb/SANT-like DNA-binding domain-containing protein 4 (408 aa).

The 74-residue stretch at 4–77 (LKRKRKSNFS…EVKRRYLDWR (74 aa)) folds into the Myb-like domain. A coiled-coil region spans residues 236–367 (HLLVTLEKQK…IEKERLQDAL (132 aa)).

In Xenopus tropicalis (Western clawed frog), this protein is Myb/SANT-like DNA-binding domain-containing protein 4 (msantd4).